A 287-amino-acid chain; its full sequence is Pyridoxal kinase PdxY (287 aa).

Substrate is bound by residues serine 9 and 44–45 (MQ). Residues aspartate 111, alanine 142, glutamate 147, and lysine 180 each coordinate ATP. Aspartate 221 is a substrate binding site.

Belongs to the pyridoxine kinase family. PdxY subfamily. In terms of assembly, homodimer. It depends on Mg(2+) as a cofactor.

It carries out the reaction pyridoxal + ATP = pyridoxal 5'-phosphate + ADP + H(+). It participates in cofactor metabolism; pyridoxal 5'-phosphate salvage; pyridoxal 5'-phosphate from pyridoxal: step 1/1. In terms of biological role, pyridoxal kinase involved in the salvage pathway of pyridoxal 5'-phosphate (PLP). Catalyzes the phosphorylation of pyridoxal to PLP. In Burkholderia mallei (strain ATCC 23344), this protein is Pyridoxal kinase PdxY.